A 101-amino-acid polypeptide reads, in one-letter code: Protein mes1 (101 aa).

Over residues 1–19 the composition is skewed to basic and acidic residues; it reads MVNTDNKENEPPNMEKAHM. The segment at 1-101 is disordered; that stretch reads MVNTDNKENE…RSPNPLLSMR (101 aa).

In terms of assembly, interacts with slp1.

Its subcellular location is the cytoplasm. It localises to the nucleus. Its function is as follows. Specifically required for meiosis II (MII). Binds to slp1, an activator of the anapahase promoting complex/cyclcosome (APC/C), and counteracts its function in promoting proteolysis of cdc13. By suppressing the degradation of cdc13 at anaphase I this protein may help maintain a sufficient level of cdc2 kinase activity to complete MII. The sequence is that of Protein mes1 (mes1) from Schizosaccharomyces pombe (strain 972 / ATCC 24843) (Fission yeast).